The primary structure comprises 129 residues: Trefoil factor 2 (129 aa).

Positions 1 to 23 (MGPRGAPLLVVVLVLGLHALAEG) are cleaved as a signal peptide. P-type domains are found at residues 29–73 (CRCS…FHPL) and 79–122 (EQCV…FFPQ). Cystine bridges form between Cys29–Cys127, Cys31–Cys58, Cys42–Cys57, Cys52–Cys69, Cys81–Cys107, Cys91–Cys106, and Cys101–Cys118.

As to expression, expressed in the digestive tract, where it was found predominantly in the stomach with highest expression in the antrum. It is secreted predominantly from antral mucous cells into the lumen of the gastrointestinal tract.

Its subcellular location is the secreted. Its function is as follows. Inhibits gastrointestinal motility and gastric acid secretion. Could function as a structural component of gastric mucus, possibly by stabilizing glycoproteins in the mucus gel through interactions with carbohydrate side chains. The chain is Trefoil factor 2 (Tff2) from Rattus norvegicus (Rat).